The primary structure comprises 316 residues: Aspartate carbamoyltransferase catalytic subunit (316 aa).

The carbamoyl phosphate site is built by arginine 66 and threonine 67. Residue lysine 94 coordinates L-aspartate. Carbamoyl phosphate-binding residues include arginine 116, histidine 146, and glutamine 149. 2 residues coordinate L-aspartate: arginine 180 and arginine 235. Residues glycine 276 and proline 277 each coordinate carbamoyl phosphate.

This sequence belongs to the aspartate/ornithine carbamoyltransferase superfamily. ATCase family. Heterododecamer (2C3:3R2) of six catalytic PyrB chains organized as two trimers (C3), and six regulatory PyrI chains organized as three dimers (R2).

It catalyses the reaction carbamoyl phosphate + L-aspartate = N-carbamoyl-L-aspartate + phosphate + H(+). It functions in the pathway pyrimidine metabolism; UMP biosynthesis via de novo pathway; (S)-dihydroorotate from bicarbonate: step 2/3. Its function is as follows. Catalyzes the condensation of carbamoyl phosphate and aspartate to form carbamoyl aspartate and inorganic phosphate, the committed step in the de novo pyrimidine nucleotide biosynthesis pathway. The protein is Aspartate carbamoyltransferase catalytic subunit of Stenotrophomonas maltophilia (strain K279a).